A 500-amino-acid polypeptide reads, in one-letter code: Signal transduction histidine-protein kinase/phosphatase UhpB (500 aa).

Transmembrane regions (helical) follow at residues 8–28 (LITV…LWSI), 78–98 (VALA…LPVA), 112–132 (LLLQ…PWLG), 140–160 (ALLL…VFWH), 185–205 (HLIW…GLPA), 207–224 (LSRF…ALAW), 231–249 (ALIA…QTWH), and 253–273 (VDLL…GAGI). At 274–500 (QRLRELNQSL…VSVSLPQRYV (227 aa)) the chain is on the cytoplasmic side. In terms of domain architecture, Histidine kinase spans 311–499 (ELHDDIGQTI…RVSVSLPQRY (189 aa)). Residue His-313 is modified to Phosphohistidine; by autocatalysis.

Autophosphorylated.

It is found in the cell inner membrane. It catalyses the reaction ATP + protein L-histidine = ADP + protein N-phospho-L-histidine.. Functionally, part of the UhpABC signaling cascade that controls the expression of the hexose phosphate transporter UhpT. UhpB functions as a membrane-associated protein kinase that autophosphorylates in response to interaction with UhpC, and subsequently transfers its phosphate group to the response regulator UhpA. Can also dephosphorylate UhpA. The polypeptide is Signal transduction histidine-protein kinase/phosphatase UhpB (uhpB) (Salmonella typhimurium (strain LT2 / SGSC1412 / ATCC 700720)).